The chain runs to 433 residues: NADH-quinone oxidoreductase subunit D (433 aa).

It belongs to the complex I 49 kDa subunit family. NDH-1 is composed of 14 different subunits. Subunits NuoB, C, D, E, F, and G constitute the peripheral sector of the complex.

It is found in the cell membrane. It carries out the reaction a quinone + NADH + 5 H(+)(in) = a quinol + NAD(+) + 4 H(+)(out). In terms of biological role, NDH-1 shuttles electrons from NADH, via FMN and iron-sulfur (Fe-S) centers, to quinones in the respiratory chain. The immediate electron acceptor for the enzyme in this species is believed to be a menaquinone. Couples the redox reaction to proton translocation (for every two electrons transferred, four hydrogen ions are translocated across the cytoplasmic membrane), and thus conserves the redox energy in a proton gradient. The polypeptide is NADH-quinone oxidoreductase subunit D (Cutibacterium acnes (strain DSM 16379 / KPA171202) (Propionibacterium acnes)).